The chain runs to 708 residues: Polyribonucleotide nucleotidyltransferase (708 aa).

The Mg(2+) site is built by Asp-487 and Asp-493. Residues 554–613 enclose the KH domain; that stretch reads PRIHTMKISADKIKDVIGKGGAVIRALTEETGTTIEIEDDGTIKIAATEGAAAKEAIRRI. The S1 motif domain maps to 623 to 691; sequence GVIYTGKVAR…RQGRVRLSMK (69 aa).

It belongs to the polyribonucleotide nucleotidyltransferase family. As to quaternary structure, component of the RNA degradosome, which is a multiprotein complex involved in RNA processing and mRNA degradation. It depends on Mg(2+) as a cofactor.

It is found in the cytoplasm. It catalyses the reaction RNA(n+1) + phosphate = RNA(n) + a ribonucleoside 5'-diphosphate. Involved in mRNA degradation. Catalyzes the phosphorolysis of single-stranded polyribonucleotides processively in the 3'- to 5'-direction. The protein is Polyribonucleotide nucleotidyltransferase of Vibrio vulnificus (strain CMCP6).